Here is a 406-residue protein sequence, read N- to C-terminus: MSRRRISCKDLGHADCQGWLYKKKEKGTFLSNKWKKFWVVLKGSSLYWYSNQMAEKADGFVNLSDFTVERASECKKKNAFKINHPQIKAFYFAAENLQEMNVWLNKLGFAVTHQESITKDEECYSESEQEDPEVAVEAPPPPYASTTSSPVAAQWASSSSPKRRETSCSFSSLENTVKAPSQFSSSGSKERQSWHNIVNSSPATEDAGLPLTFAEQVHTLAFSEASNCQAPENNCITSEGGLLNLLSSDDTSSLNNNKDHLTVPDRAAGSRMADREEIKSSEDDEMEKLYKSLEQASLSPLGDRRPSTKKELRKSFVKRCKNPSINEKLHKIRTLNSTLKCKEHDLAMINQLLDDPKLTARKYREWKVMNTLLIQDIYQQQAPQDPEVTPQEVMNPTSSDCVENSL.

Residues His13 to Thr112 enclose the PH domain. Disordered stretches follow at residues Asp120–Leu173, Ser253–Glu285, and Pro383–Leu406. The span at Cys123–Val134 shows a compositional bias: acidic residues. A compositionally biased stretch (low complexity) spans Ala144 to Ala153. Arg164 bears the Phosphoserine mark. The span at Met272–Glu285 shows a compositional bias: basic and acidic residues. Over residues Glu392–Leu406 the composition is skewed to polar residues.

As to quaternary structure, interacts with guanine-nucleotide exchange factors PSCD1, PSCD2, PSCD3 and PSCD4.

It localises to the cytoplasm. Its subcellular location is the cell membrane. Functionally, enhances the promotion of guanine-nucleotide exchange by PSCD2 on ARF6 in a concentration-dependent manner. This is Interactor protein for cytohesin exchange factors 1 (Ipcef1) from Mus musculus (Mouse).